A 441-amino-acid chain; its full sequence is Tol-Pal system protein TolB (441 aa).

An N-terminal signal peptide occupies residues 1-39 (MPAMTPAFRRADLTGFLRTYGAALILLLAAMLAWQPAQA).

Belongs to the TolB family. As to quaternary structure, the Tol-Pal system is composed of five core proteins: the inner membrane proteins TolA, TolQ and TolR, the periplasmic protein TolB and the outer membrane protein Pal. They form a network linking the inner and outer membranes and the peptidoglycan layer.

Its subcellular location is the periplasm. In terms of biological role, part of the Tol-Pal system, which plays a role in outer membrane invagination during cell division and is important for maintaining outer membrane integrity. The polypeptide is Tol-Pal system protein TolB (Bordetella bronchiseptica (strain ATCC BAA-588 / NCTC 13252 / RB50) (Alcaligenes bronchisepticus)).